The following is a 299-amino-acid chain: Non-structural protein V (299 aa).

Positions 40-98 (SDNPGQEQATCKEEEAGASGLSKPCLSAIGSTEGGAPRIRGQGSGESDDDTETLGFPSR) are disordered. The interval 110–120 (YYVYDHSGEAV) is interaction with host STAT1. Residues 134-145 (GLDGDSTLSGGD) show a composition bias toward low complexity. Disordered regions lie at residues 134 to 174 (GLDG…APIS) and 204 to 230 (PKLG…PIKK). Positions 146–160 (NESENSDVDIGEPDT) are enriched in acidic residues. Positions 232, 251, 255, 267, 269, 272, 276, and 279 each coordinate Zn(2+).

Belongs to the paramyxoviruses V protein family. Interacts with host IFIH1/MDA5 and DHX58/LGP2; these interactions are involved in the inhibition of the host type I interferon signaling pathway. Interacts with host TYK2; this interaction inhibits the type I interferon signaling pathway without affecting the type II pathway. Interacts with host IRF7; this interaction inhibits IRF7 translocation to the nucleus. Interacts with host CHUK. Interacts with host RELA/p65; this interaction inhibits the nuclear translocation of NF-KappaB. Interacts (via N-terminus) with host STAT1 and JAK1; these interactions inhibit STAT1 phosphorylation by Jak1 and thereby the type I interferon signaling pathway. Interacts (via C-terminus) with host STAT2; this interaction is involved in the inhibition of the host type I interferon signaling pathway. Forms a complex with host PPP1CA and PPP1CC; this interaction prevents dephosphorylation of host IFIH1/MDA5 and leads to the inhibition of the host type I interferon signaling pathway. Interacts with host IRF9; this interaction prevents the binding of IRF9 to STAT2 and thereby the type I interferon signaling pathway. Interacts with host RIGI regulatory protein (via CARDs domain) and host TRIM25 (via SPRY domain); these interactions prevent TRIM25-mediated ubiquitination of RIG-I and disrupts downstream RIG-I signaling.

The protein localises to the host cytoplasm. Its function is as follows. Plays an essential role in the inhibition of host immune response. Prevents the establishment of cellular antiviral state by blocking interferon-alpha/beta (IFN-alpha/beta) production and signaling pathway. Interacts with host IFIH1/MDA5 and DHX58/LGP2 to inhibit the transduction pathway involved in the activation of IFN-beta promoter, thus protecting the virus against cell antiviral state. Blocks the type I interferon signaling pathway by interacting with host TYK2 and thereby inhibiting downstream STAT1 and STAT2 phosphorylation. Blocks the type I interferon signaling pathway by disrupting the RIG-I signaling pathway. Moderately affects the type II interferon signaling. Prevents PP1alpha/gamma-mediated dephosphorylation of host IFIH1/MDA5 and thus blocks its activation. The chain is Non-structural protein V (P/V) from Measles virus (strain IP-3-Ca) (MeV).